Reading from the N-terminus, the 458-residue chain is Putative long chain fatty acid-CoA ligase VraA (458 aa).

The protein belongs to the ATP-dependent AMP-binding enzyme family.

The sequence is that of Putative long chain fatty acid-CoA ligase VraA (vraA) from Staphylococcus aureus (strain Mu3 / ATCC 700698).